Consider the following 563-residue polypeptide: Putative GMC-type oxidoreductase L128 (563 aa).

Residues 1–21 form the signal peptide; that stretch reads MTSSIVLKFFLIATLLVIANS. 48-77 is an FAD binding site; the sequence is DYVIVGGGAAGSVLLDKCISYGYKCTLIER. The active-site Proton acceptor is the His-504.

It belongs to the GMC oxidoreductase family. Requires FAD as cofactor.

The chain is Putative GMC-type oxidoreductase L128 from Acanthamoeba polyphaga mimivirus (APMV).